A 561-amino-acid polypeptide reads, in one-letter code: Oligo-1,6-glucosidase 1 (561 aa).

5 residues coordinate Ca(2+): Asp-20, Asn-22, Asp-24, Phe-26, and Asp-28. Asp-199 acts as the Nucleophile in catalysis. Glu-255 serves as the catalytic Proton donor.

This sequence belongs to the glycosyl hydrolase 13 family.

It is found in the cytoplasm. It catalyses the reaction Hydrolysis of (1-&gt;6)-alpha-D-glucosidic linkages in some oligosaccharides produced from starch and glycogen by alpha-amylase, and in isomaltose.. Its function is as follows. Hydrolyzes various disaccharides such as sucrose, maltose, and isomaltose with different efficiencies. Also hydrolyzes longer maltodextrins from maltotriose up to maltohexaose, but not maltoheptaose, palatinose, isomaltotriose, or isomaltotetraose. The sequence is that of Oligo-1,6-glucosidase 1 (malL) from Bacillus subtilis (strain 168).